Consider the following 292-residue polypeptide: Protease HtpX (292 aa).

Transmembrane regions (helical) follow at residues 5–25 (IFLFLLTNLAVLMLAGIVMSL) and 34–54 (SGLLVMAAIFGFGGSFISLLL). Position 140 (His-140) interacts with Zn(2+). Glu-141 is an active-site residue. His-144 serves as a coordination point for Zn(2+). 2 consecutive transmembrane segments (helical) span residues 155–175 (LLQGVLNTFVIVLARVVGGII) and 193–213 (IIVFALEMVFGLFATMIAMWF). Residue Glu-218 participates in Zn(2+) binding.

Belongs to the peptidase M48B family. Zn(2+) is required as a cofactor.

The protein localises to the cell inner membrane. The protein is Protease HtpX of Xanthomonas axonopodis pv. citri (strain 306).